The following is a 483-amino-acid chain: Krueppel-like factor 4 (483 aa).

The disordered stretch occupies residues 22–42 (TFASGPAGREKTLRPAGAPTN). Residue Lys-32 forms a Glycyl lysine isopeptide (Lys-Gly) (interchain with G-Cter in ubiquitin) linkage. Residues 99 to 107 (DLLDLDFIL) carry the 9aaTAD motif. Residue Ser-251 is modified to Phosphoserine. Residues 294-395 (AGPQLSNGHR…KRGRRSWPRK (102 aa)) form a disordered region. Over residues 338–356 (LPLPPGFHPHPGPNYPPFL) the composition is skewed to pro residues. The residue at position 381 (Glu-381) is a 5-glutamyl polyglutamate. The span at 386 to 395 (KRGRRSWPRK) shows a compositional bias: basic residues. The interaction with ZNF296 stretch occupies residues 386 to 483 (KRGRRSWPRK…HLALHMKRHF (98 aa)). 3 consecutive C2H2-type zinc fingers follow at residues 400–424 (HTCD…LRTH), 430–454 (YHCD…YRKH), and 460–482 (FQCQ…MKRH). The tract at residues 443 to 474 (RSDELTRHYRKHTGHRPFQCQKCDRAFSRSDH) is interaction with target DNA.

Belongs to the krueppel C2H2-type zinc-finger protein family. Interacts with MUC1 (via the C-terminal domain). Interacts with POU5F1/OCT4 and SOX2. Interacts with MEIS2 isoform MeisD and PBX1 isoform PBX1a. Interacts with ZNF296. Interacts with GLIS1. Interacts with BTRC; this interaction leads to KLF4 ubiquitination and subsequent degradation. Interacts with IPO7; the interaction facilitates nuclear translocation of KLF4 in dental papilla cells. Post-translationally, ubiquitinated. 'Lys-48'-linked ubiquitinated and targeted for proteasomal degradation by the SCF(BTRC) E3 ubiquitin-protein ligase complex, thereby negatively regulating cell pluripotency maintenance and embryogenesis. Polyglutamylated by TTLL1 and TTLL4 at Glu-381, which inhibits KLF4 binding with E3 ligase component BTRC, thereby impeding ubiquitination. Deglutamylated by CCP1 and CCP6; deglutamylation promotes KLF4 ubiquitination. KLF4 glutamylation state plays a critical role in the regulation of its function in cell reprogramming, pluripotency maintenance and embryogenesis. Highest expression in the colon. Lower levels in testis, lung and small intestine.

It localises to the nucleus. Its subcellular location is the cytoplasm. Functionally, transcription factor; can act both as activator and as repressor. Binds the 5'-CACCC-3' core sequence. Binds to the promoter region of its own gene and can activate its own transcription. Regulates the expression of key transcription factors during embryonic development. Plays an important role in maintaining embryonic stem cells, and in preventing their differentiation. Required for establishing the barrier function of the skin and for postnatal maturation and maintenance of the ocular surface. Involved in the differentiation of epithelial cells and may also function in skeletal and kidney development. Contributes to the down-regulation of p53/TP53 transcription. This chain is Krueppel-like factor 4 (Klf4), found in Mus musculus (Mouse).